A 318-amino-acid chain; its full sequence is Leucine-rich repeat domain-containing protein YddK (318 aa).

LRR repeat units lie at residues 109–129 (NFTSINLDNNQFTHFDATNYD), 130–151 (RLVKLSLNSNALESINFPQGRN), 153–173 (SITHISMNNNALRNIDIDRLS), 174–194 (SVTYFSAAHNQLEFVQLESCE), 195–216 (WLQYLNLSHNQLTDIVAGNKNE), 217–237 (LLLLDLSHNKLTSLHNDLFPN), 238–258 (LNTLLINNNLLSEIKIFYSNF), 260–280 (NVQTLNAANNQLKYINLDFLT), and 284–305 (SIKSLRLDNNKITHIDTNNTSD).

In Escherichia coli (strain K12), this protein is Leucine-rich repeat domain-containing protein YddK (yddK).